Reading from the N-terminus, the 496-residue chain is E3 ubiquitin-protein ligase CBL-C (496 aa).

Residues P7–C144 form a 4H region. Residues P7–E320 form the Cbl-PTB domain. Positions G145 to F217 are EF-hand-like. The Ca(2+) site is built by D198, T200, N202, and E209. The interval Q218–E320 is SH2-like. R263 contributes to the 4-O-phospho-L-tyrosine binding site. Positions L321–L349 are linker. Y340 is modified (phosphotyrosine; by SRC). The segment at C350 to R389 adopts an RING-type zinc-finger fold. The interval C350 to E494 is interaction with RET. The segment at P432–K453 is disordered.

Interacts with Ubiquitin-conjugating enzyme E2 UBE2D2 and UBE2D3. Isoform 1 interacts with EGFR (tyrosine phosphorylated). Interacts with the SH3 domain proteins LYN and CRK. Interacts (via RING-type zinc finger) with TGFB1I1 (via LIM zinc-binding domain 2); the interaction is direct and enhances the E3 activity. Interacts directly with RET (inactive) and CD2AP; dissociates from RET upon RET activation by GDNF which also increases the interaction with CD2AP suggesting dissociation as CBLC:CD2AP complex. Interacts with SRC; the interaction is enhanced when SRC is phosphorylated at 'Tyr-419'. In terms of processing, phosphorylated on tyrosines by EGFR. Post-translationally, phosphorylated on multiple tyrosine residues by SRC. Isoform 1, but not isoform 2, is phosphorylated on tyrosines by EGFR. Autoubiquitinated, when phosphorylated at Tyr-340. Widely expressed in tissues, where the expression is restricted to epithelial cells (at protein level).

The enzyme catalyses S-ubiquitinyl-[E2 ubiquitin-conjugating enzyme]-L-cysteine + [acceptor protein]-L-lysine = [E2 ubiquitin-conjugating enzyme]-L-cysteine + N(6)-ubiquitinyl-[acceptor protein]-L-lysine.. Its activity is regulated as follows. Phosphorylation at Tyr-340 is necessary and sufficient for the activation of E3 activity. Acts as an E3 ubiquitin-protein ligase, which accepts ubiquitin from specific E2 ubiquitin-conjugating enzymes, and then transfers it to substrates promoting their degradation by the proteasome. Functionally coupled with the E2 ubiquitin-protein ligases UB2D1, UB2D2 and UB2D3. Regulator of EGFR mediated signal transduction; upon EGF activation, ubiquitinates EGFR. Isoform 1, but not isoform 2, inhibits EGF stimulated MAPK1 activation. Promotes ubiquitination of SRC phosphorylated at 'Tyr-424', has the highest ubiquitin ligase activity among CBL family proteins. In collaboration with CD2AP may act as regulatory checkpoint for Ret signaling by modulating the rate of RET degradation after ligand activation; CD2AP converts it from an inhibitor to a promoter of RET degradation; the function limits the potency of GDNF on neuronal survival. The chain is E3 ubiquitin-protein ligase CBL-C (Cblc) from Mus musculus (Mouse).